Reading from the N-terminus, the 196-residue chain is uncharacterized protein (196 aa).

CBS domains follow at residues 10–69 and 76–132; these read ARRD…NPDE and MSQP…LVAT. The 35-residue stretch at 153–187 folds into the ACP-type MB domain; sequence IIEGVCDLCETYSEELRFVDGVWVCPECYEDILGR. The Fe cation site is built by cysteine 158, cysteine 161, cysteine 177, and cysteine 180. Residues cysteine 158, cysteine 161, cysteine 177, and cysteine 180 each contribute to the Zn(2+) site.

This is an uncharacterized protein from Methanopyrus kandleri (strain AV19 / DSM 6324 / JCM 9639 / NBRC 100938).